A 152-amino-acid polypeptide reads, in one-letter code: Sorting nexin-3 (152 aa).

The 118-residue stretch at 30 to 147 (NFLEIEVRSP…CAFIQDPQWD (118 aa)) folds into the PX domain. A 1,2-diacyl-sn-glycero-3-phospho-(1D-myo-inositol-3-phosphate) is bound by residues R73, S75, K99, R104, and R113.

Belongs to the sorting nexin family.

It localises to the cytoplasm. The protein resides in the golgi apparatus membrane. The protein localises to the prevacuolar compartment membrane. Required for retention of late Golgi membrane proteins. Component of the retrieval machinery that functions by direct interaction with the cytosolic tails of certain TGN membrane proteins during the sorting/budding process at the prevacuolar compartment. Binds phosphatidylinositol 3-phosphate (PtdIns(P3)). The sequence is that of Sorting nexin-3 (SNX3) from Yarrowia lipolytica (strain CLIB 122 / E 150) (Yeast).